Consider the following 276-residue polypeptide: Radial spoke head protein 9 homolog (276 aa).

Belongs to the flagellar radial spoke RSP9 family. Component of the axonemal radial spoke 1 (RS1) and 2 (RS2) complexes, at least composed of spoke head proteins RSPH1, RSPH3, RSPH9 and the cilia-specific component RSPH4A or sperm-specific component RSPH6A, spoke stalk proteins RSPH14, DNAJB13, DYDC1, ROPN1L and NME5, and the RS1 complex-specific anchor protein IQUB. Interacts with IQUB. Interacts with RSPH3B. Interacts with RSPH4A. Interacts with RSPH6A. Interacts with CFAP61. Interacts with LRRC23. Expressed in the testis, trachea, lung, oviduct and ependymal cells (at protein level).

It is found in the cytoplasm. It localises to the cytoskeleton. Its subcellular location is the cilium axoneme. The protein resides in the flagellum axoneme. The protein localises to the cell projection. It is found in the kinocilium. In terms of biological role, functions as part of axonemal radial spoke complexes that play an important part in the motility of sperm and cilia. Essential for both the radial spoke head assembly and the central pair microtubule stability in ependymal motile cilia. Required for motility of olfactory and neural cilia and for the structural integrity of ciliary axonemes in both 9+0 and 9+2 motile cilia. The polypeptide is Radial spoke head protein 9 homolog (Rsph9) (Mus musculus (Mouse)).